We begin with the raw amino-acid sequence, 374 residues long: Methylthioribose-1-phosphate isomerase (374 aa).

The active-site Proton donor is the Asp-251.

Belongs to the eIF-2B alpha/beta/delta subunits family. MtnA subfamily.

It localises to the cytoplasm. The protein resides in the nucleus. It catalyses the reaction 5-(methylsulfanyl)-alpha-D-ribose 1-phosphate = 5-(methylsulfanyl)-D-ribulose 1-phosphate. It functions in the pathway amino-acid biosynthesis; L-methionine biosynthesis via salvage pathway; L-methionine from S-methyl-5-thio-alpha-D-ribose 1-phosphate: step 1/6. Catalyzes the interconversion of methylthioribose-1-phosphate (MTR-1-P) into methylthioribulose-1-phosphate (MTRu-1-P). The sequence is that of Methylthioribose-1-phosphate isomerase from Oryza sativa subsp. indica (Rice).